A 404-amino-acid chain; its full sequence is Cytochrome b561 and DOMON domain-containing protein At5g35735 (404 aa).

Positions 1–25 (MDRTQSPKTALFAVLATLLVLTVNG) are cleaved as a signal peptide. The region spanning 49–164 (LGSFLHWTYN…ITANQLWQVG (116 aa)) is the DOMON domain. The region spanning 170–369 (VPASHQTSGD…LEPLTWFIVL (200 aa)) is the Cytochrome b561 domain. The segment at 172–207 (ASHQTSGDNMRSSGRIDFRTGQASAGGGGSGDRLRK) is disordered. The span at 173–183 (SHQTSGDNMRS) shows a compositional bias: polar residues. 2 helical membrane passes run 210–230 (THGV…AMMA) and 241–261 (WFYL…AGWA). Positions 211, 245, and 278 each coordinate heme b. The chain crosses the membrane as a helical span at residues 280–300 (NLGIALFTFATLQVFALLVRP). H314 provides a ligand contact to heme b. 2 helical membrane-spanning segments follow: residues 316–336 (TVGY…FDIL) and 349–369 (ILIF…FIVL). Residues 376–404 (GNTVAAPTSSKYSNGVNGTTTTGPHHQDA) form a disordered region. Over residues 380–404 (AAPTSSKYSNGVNGTTTTGPHHQDA) the composition is skewed to polar residues.

Heme b serves as cofactor.

The protein resides in the membrane. In terms of biological role, may act as a catecholamine-responsive trans-membrane electron transporter. In Arabidopsis thaliana (Mouse-ear cress), this protein is Cytochrome b561 and DOMON domain-containing protein At5g35735.